A 340-amino-acid chain; its full sequence is Anthranilate phosphoribosyltransferase (340 aa).

5-phospho-alpha-D-ribose 1-diphosphate-binding positions include G83, 86–87 (GD), T91, 93–96 (NVST), 111–119 (KHGNRSVSS), and S123. G83 is an anthranilate binding site. A Mg(2+)-binding site is contributed by S95. N114 contacts anthranilate. R169 is a binding site for anthranilate. D228 and E229 together coordinate Mg(2+).

This sequence belongs to the anthranilate phosphoribosyltransferase family. As to quaternary structure, homodimer. It depends on Mg(2+) as a cofactor.

It catalyses the reaction N-(5-phospho-beta-D-ribosyl)anthranilate + diphosphate = 5-phospho-alpha-D-ribose 1-diphosphate + anthranilate. The protein operates within amino-acid biosynthesis; L-tryptophan biosynthesis; L-tryptophan from chorismate: step 2/5. Functionally, catalyzes the transfer of the phosphoribosyl group of 5-phosphorylribose-1-pyrophosphate (PRPP) to anthranilate to yield N-(5'-phosphoribosyl)-anthranilate (PRA). The chain is Anthranilate phosphoribosyltransferase from Aquifex aeolicus (strain VF5).